Here is a 170-residue protein sequence, read N- to C-terminus: Large ribosomal subunit protein uL10 (170 aa).

This sequence belongs to the universal ribosomal protein uL10 family. In terms of assembly, part of the ribosomal stalk of the 50S ribosomal subunit. The N-terminus interacts with L11 and the large rRNA to form the base of the stalk. The C-terminus forms an elongated spine to which L12 dimers bind in a sequential fashion forming a multimeric L10(L12)X complex.

In terms of biological role, forms part of the ribosomal stalk, playing a central role in the interaction of the ribosome with GTP-bound translation factors. This Chlamydia abortus (strain DSM 27085 / S26/3) (Chlamydophila abortus) protein is Large ribosomal subunit protein uL10.